Consider the following 140-residue polypeptide: Nucleoside diphosphate kinase (140 aa).

ATP is bound by residues K11, F59, R87, T93, R104, and N114. H117 serves as the catalytic Pros-phosphohistidine intermediate.

This sequence belongs to the NDK family. In terms of assembly, homotetramer. Mg(2+) serves as cofactor.

Its subcellular location is the cytoplasm. The enzyme catalyses a 2'-deoxyribonucleoside 5'-diphosphate + ATP = a 2'-deoxyribonucleoside 5'-triphosphate + ADP. It catalyses the reaction a ribonucleoside 5'-diphosphate + ATP = a ribonucleoside 5'-triphosphate + ADP. Functionally, major role in the synthesis of nucleoside triphosphates other than ATP. The ATP gamma phosphate is transferred to the NDP beta phosphate via a ping-pong mechanism, using a phosphorylated active-site intermediate. The polypeptide is Nucleoside diphosphate kinase (Rhodopseudomonas palustris (strain ATCC BAA-98 / CGA009)).